Reading from the N-terminus, the 61-residue chain is Ferredoxin (61 aa).

The 27-residue stretch at 2-28 (LYITEECTYCGACEPECPTNAISAGSE) folds into the 4Fe-4S ferredoxin-type domain. [4Fe-4S] cluster-binding residues include cysteine 8, cysteine 11, cysteine 14, cysteine 18, cysteine 37, cysteine 40, cysteine 49, and cysteine 53.

It depends on [4Fe-4S] cluster as a cofactor.

Its function is as follows. Ferredoxins are iron-sulfur proteins that transfer electrons in a wide variety of metabolic reactions. The polypeptide is Ferredoxin (Chlorobaculum thiosulfatiphilum (Chlorobium limicola f.sp. thiosulfatophilum)).